The following is a 172-amino-acid chain: uncharacterized protein (172 aa).

Residues 147-159 (AGSGSGSGSGSGS) show a composition bias toward gly residues. The tract at residues 147–172 (AGSGSGSGSGSGSDTGPFKKSQYKIL) is disordered.

This is an uncharacterized protein from Homo sapiens (Human).